The chain runs to 389 residues: Aspartic protease pepA (389 aa).

Residues 1–20 (MVLINQLGAVLAVCATLTVA) form the signal peptide. Positions 21–67 (APTKGKARFNVPQVAIPKKMVHHPAVSYARALHKFGMKVPKTVQDAA) are cleaved as a propeptide — activation peptide. One can recognise a Peptidase A1 domain in the interval 82–386 (YVTQVTVGEG…DTQGPRIGFA (305 aa)). Asp98 is an active-site residue. Asn257 is a glycosylation site (N-linked (GlcNAc...) asparagine). Asp279 is a catalytic residue. A disulfide bond links Cys315 and Cys348.

It belongs to the peptidase A1 family. In terms of assembly, monomer.

It is found in the secreted. In terms of biological role, secreted aspartic endopeptidase that allows assimilation of proteinaceous substrates. The scissile peptide bond is attacked by a nucleophilic water molecule activated by two aspartic residues in the active site. Shows a broad primary substrate specificity. Favors hydrophobic residues at the P1 and P1' positions. This is Aspartic protease pepA from Arthroderma otae (strain ATCC MYA-4605 / CBS 113480) (Microsporum canis).